Here is a 320-residue protein sequence, read N- to C-terminus: Transmembrane protein 41 homolog (320 aa).

Positions 20-72 (GRAKALQEHSPDQVATPLLPQVPPQEQQDLNPQQQQQQQQQQQATPQKQAMSA) are disordered. Residues 43–68 (PQEQQDLNPQQQQQQQQQQQATPQKQ) are compositionally biased toward low complexity. 6 consecutive transmembrane segments (helical) span residues 83 to 103 (VIVA…YAIF), 141 to 161 (VMFG…PGSL), 173 to 195 (FPIA…YTLS), 225 to 242 (LFNY…PNWF), 245 to 265 (LASP…FCGV), and 289 to 309 (FSWT…LPGL).

It belongs to the TMEM41 family. In terms of tissue distribution, in embryos, strongly expressed in the nervous system.

Its subcellular location is the membrane. In terms of biological role, required in cholinergic neurons, but not in motor neurons, for normal neurotransmitter release by motor neurons. Involved in muscle growth. This chain is Transmembrane protein 41 homolog (stas), found in Drosophila melanogaster (Fruit fly).